The chain runs to 560 residues: DNA-directed primase/polymerase protein (560 aa).

A coiled-coil region spans residues 1–22 (MNRKWEAKLKQIEERASHYERK). Substrate-binding positions include Arg76, 114–116 (DLE), and 165–169 (KFSRH). Mn(2+)-binding residues include Asp114 and Glu116. A disordered region spans residues 203–223 (EDDDSAPETTGHGFPHFSEAP). Phosphoserine is present on Ser255. Residues 288 to 291 (RNFR) and Lys297 contribute to the substrate site. Residues Cys419, His426, Cys446, and Cys451 each contribute to the Zn(2+) site. The Zinc knuckle motif motif lies at 419–452 (CENIGRAHKSNNIMILVDLKNEVWYQKCHDPVCK). A disordered region spans residues 480 to 507 (TTDEADETRSNETQNPHKPSPSRLSTGA). Residues 481–560 (TDEADETRSN…DELIIEVLQE (80 aa)) are interaction with RPA1. Polar residues predominate over residues 490-507 (NETQNPHKPSPSRLSTGA). 2 consecutive short sequence motifs (RPA1-binding motif) follow at residues 513 to 527 (WDNGIDDAYFLEATE) and 548 to 556 (EIPDELIIE).

This sequence belongs to the eukaryotic-type primase small subunit family. As to quaternary structure, interacts with RPA1; leading to recruitment to chromatin and stimulate DNA primase activity. Interacts with SSBP1. Interacts with POLDIP2; leading to enhance DNA polymerase activity. Mn(2+) is required as a cofactor.

Its subcellular location is the nucleus. It is found in the mitochondrion matrix. The protein localises to the chromosome. The enzyme catalyses ssDNA + n NTP = ssDNA/pppN(pN)n-1 hybrid + (n-1) diphosphate.. It carries out the reaction DNA(n) + a 2'-deoxyribonucleoside 5'-triphosphate = DNA(n+1) + diphosphate. DNA primase and DNA polymerase required to tolerate replication-stalling lesions by bypassing them. Required to facilitate mitochondrial and nuclear replication fork progression by initiating de novo DNA synthesis using dNTPs and acting as an error-prone DNA polymerase able to bypass certain DNA lesions. Shows a high capacity to tolerate DNA damage lesions such as 8oxoG and abasic sites in DNA. Provides different translesion synthesis alternatives when DNA replication is stalled: able to synthesize DNA primers downstream of lesions, such as ultraviolet (UV) lesions, R-loops and G-quadruplexes, to allow DNA replication to continue. Can also realign primers ahead of 'unreadable lesions' such as abasic sites and 6-4 photoproduct (6-4 pyrimidine-pyrimidinone), thereby skipping the lesion. Repriming avoids fork degradation while leading to accumulation of internal ssDNA gaps behind the forks. Also able to incorporate nucleotides opposite DNA lesions such as 8oxoG, like a regular translesion synthesis DNA polymerase. Also required for reinitiating stalled forks after UV damage during nuclear DNA replication. Required for mitochondrial DNA (mtDNA) synthesis and replication, by reinitiating synthesis after UV damage or in the presence of chain-terminating nucleotides. Prevents APOBEC family-mediated DNA mutagenesis by repriming downstream of abasic site to prohibit error-prone translesion synthesis. Has non-overlapping function with POLH. In addition to its role in DNA damage response, also required to maintain efficient nuclear and mitochondrial DNA replication in unperturbed cells. The polypeptide is DNA-directed primase/polymerase protein (Homo sapiens (Human)).